A 473-amino-acid chain; its full sequence is Cysteine protease ATG4A (473 aa).

A disordered region spans residues 1-33 (MTSLPGRGVSPSSSDPLCEGNAAPSSSSSGQDL). The active-site Nucleophile is C160. Active-site residues include D357 and H359.

This sequence belongs to the peptidase C54 family. Interacts with ATG8.

It localises to the cytoplasm. It carries out the reaction [protein]-C-terminal L-amino acid-glycyl-phosphatidylethanolamide + H2O = [protein]-C-terminal L-amino acid-glycine + a 1,2-diacyl-sn-glycero-3-phosphoethanolamine. In terms of biological role, cysteine protease that plays a key role in autophagy by mediating both proteolytic activation and delipidation of ATG8 family proteins. The protease activity is required for proteolytic activation of ATG8 family proteins: cleaves the C-terminal amino acid of ATG8 proteins to reveal a C-terminal glycine. Exposure of the glycine at the C-terminus is essential for ATG8 proteins conjugation to phosphatidylethanolamine (PE) and insertion to membranes, which is necessary for autophagy. In addition to the protease activity, also mediates delipidation of PE-conjugated ATG8 proteins. The chain is Cysteine protease ATG4A (ATG4A) from Oryza sativa subsp. indica (Rice).